A 138-amino-acid polypeptide reads, in one-letter code: Cysteine desulfuration protein SufE (138 aa).

The active-site Cysteine persulfide intermediate is cysteine 51.

Belongs to the SufE family. Homodimer. Interacts with SufS.

It localises to the cytoplasm. It functions in the pathway cofactor biosynthesis; iron-sulfur cluster biosynthesis. Participates in cysteine desulfuration mediated by SufS. Cysteine desulfuration mobilizes sulfur from L-cysteine to yield L-alanine and constitutes an essential step in sulfur metabolism for biosynthesis of a variety of sulfur-containing biomolecules. Functions as a sulfur acceptor for SufS, by mediating the direct transfer of the sulfur atom from the S-sulfanylcysteine of SufS, an intermediate product of cysteine desulfuration process. This chain is Cysteine desulfuration protein SufE, found in Pectobacterium atrosepticum (strain SCRI 1043 / ATCC BAA-672) (Erwinia carotovora subsp. atroseptica).